We begin with the raw amino-acid sequence, 226 residues long: Thymidylate kinase (226 aa).

An ATP-binding site is contributed by 20–27 (GGEGAGKS).

It belongs to the thymidylate kinase family.

It catalyses the reaction dTMP + ATP = dTDP + ADP. In terms of biological role, phosphorylation of dTMP to form dTDP in both de novo and salvage pathways of dTTP synthesis. The sequence is that of Thymidylate kinase from Bradyrhizobium sp. (strain BTAi1 / ATCC BAA-1182).